The sequence spans 247 residues: 6-phosphogluconolactonase (247 aa).

Belongs to the glucosamine/galactosamine-6-phosphate isomerase family. 6-phosphogluconolactonase subfamily.

It carries out the reaction 6-phospho-D-glucono-1,5-lactone + H2O = 6-phospho-D-gluconate + H(+). The protein operates within carbohydrate degradation; pentose phosphate pathway; D-ribulose 5-phosphate from D-glucose 6-phosphate (oxidative stage): step 2/3. Functionally, hydrolysis of 6-phosphogluconolactone to 6-phosphogluconate. This is 6-phosphogluconolactonase (pgl) from Mycobacterium bovis (strain ATCC BAA-935 / AF2122/97).